Reading from the N-terminus, the 931-residue chain is Envelope glycoprotein B (931 aa).

Residues 1–71 form the signal peptide; it reads MSPCGYYSKW…FSMFVTAVVS (71 aa). Residues 72 to 786 are Virion surface-facing; it reads VSPSSFYESL…HGFTTFLSNP (715 aa). 5 disulfide bridges follow: Cys122-Cys584, Cys139-Cys540, Cys213-Cys277, Cys369-Cys417, and Cys608-Cys645. The N-linked (GlcNAc...) asparagine; by host glycan is linked to Asn147. The involved in fusion and/or binding to host membrane stretch occupies residues 179 to 185; the sequence is AWAGSSY. An N-linked (GlcNAc...) asparagine; by host glycan is attached at Asn257. An involved in fusion and/or binding to host membrane region spans residues 264-271; the sequence is GTPGTYRT. 4 N-linked (GlcNAc...) asparagine; by host glycosylation sites follow: Asn435, Asn503, Asn620, and Asn686. Hydrophobic membrane proximal region stretches follow at residues 731–784 and 764–784; these read IDKV…TFLS and VVLGATGALLSTVHGFTTFLS. A helical transmembrane segment spans residues 787–807; it reads FGALAVGLLVLAGLVAAFFAY. Over 808–931 the chain is Intravirion; the sequence is RYVLKLKTSP…RVRTENVTGV (124 aa). Residues 881–884 carry the Golgi targeting motif; sequence YMTL. Positions 920–923 match the Internalization motif motif; it reads YSRV.

Belongs to the herpesviridae glycoprotein B family. Homotrimer; disulfide-linked. Binds to heparan sulfate proteoglycans. Interacts with gH/gL heterodimer. A proteolytic cleavage by host furin generates two subunits that remain linked by disulfide bonds.

Its subcellular location is the virion membrane. The protein resides in the host cell membrane. The protein localises to the host endosome membrane. It is found in the host Golgi apparatus membrane. Its function is as follows. Envelope glycoprotein that forms spikes at the surface of virion envelope. Essential for the initial attachment to heparan sulfate moieties of the host cell surface proteoglycans. Involved in fusion of viral and cellular membranes leading to virus entry into the host cell. Following initial binding to its host receptors, membrane fusion is mediated by the fusion machinery composed at least of gB and the heterodimer gH/gL. May be involved in the fusion between the virion envelope and the outer nuclear membrane during virion egress. In Varicella-zoster virus (strain Oka vaccine) (HHV-3), this protein is Envelope glycoprotein B.